The sequence spans 621 residues: Chaperone protein HscA homolog (621 aa).

This sequence belongs to the heat shock protein 70 family.

Chaperone involved in the maturation of iron-sulfur cluster-containing proteins. Has a low intrinsic ATPase activity which is markedly stimulated by HscB. The sequence is that of Chaperone protein HscA homolog from Ralstonia nicotianae (strain ATCC BAA-1114 / GMI1000) (Ralstonia solanacearum).